The sequence spans 312 residues: Probable splicing factor, arginine/serine-rich 1 (312 aa).

Residues 3 to 73 enclose the RRM 1 domain; it reads ARIYIGRLTS…ERVILDYSKP (71 aa). Disordered stretches follow at residues 69–125 and 196–312; these read DYSK…GRPY and KMID…DGDN. Over residues 74 to 90 the composition is skewed to gly residues; the sequence is RGGGGDRGGFGGGGRGG. Over residues 103–121 the composition is skewed to basic and acidic residues; it reads GRDRFDRYDRGPPRRESRY. An RRM 2 domain is found at 129 to 202; it reads HRVVVENLSS…RKIKMIDDSQ (74 aa). Over residues 206–259 the composition is skewed to basic residues; sequence SRSRSNSRSRSRSRSRDRRRSRSRSSSRSKSRSRSPPKRSRRESKSKSRSRSRS.

It belongs to the splicing factor SR family. Post-translationally, extensively phosphorylated on serine residues in the RS domain.

Its subcellular location is the nucleus. Its function is as follows. Plays a functionally redundant role in spermatogenesis and growth rate control. This Caenorhabditis elegans protein is Probable splicing factor, arginine/serine-rich 1 (rsp-1).